Here is a 640-residue protein sequence, read N- to C-terminus: SUMO-activating enzyme subunit 2 (640 aa).

Residues 24–29 (GAGGIG), Asp48, 56–59 (NLNR), Lys72, 95–96 (SI), and 117–122 (DNRAAR) each bind ATP. Residues Cys158 and Cys161 each coordinate Zn(2+). Lys164 participates in a covalent cross-link: Glycyl lysine isopeptide (Lys-Gly) (interchain with G-Cter in SUMO1). Residue Cys173 is the Glycyl thioester intermediate of the active site. Lys190 is covalently cross-linked (Glycyl lysine isopeptide (Lys-Gly) (interchain with G-Cter in SUMO)). The interval 202-231 (ADQEVSPDRADPEAAWEPTEAEARARASNE) is disordered. Ser207 bears the Phosphoserine mark. Basic and acidic residues predominate over residues 222–231 (AEARARASNE). Lys236 participates in a covalent cross-link: Glycyl lysine isopeptide (Lys-Gly) (interchain with G-Cter in SUMO1); alternate. Glycyl lysine isopeptide (Lys-Gly) (interchain with G-Cter in SUMO2); alternate cross-links involve residues Lys236 and Lys257. Residues Lys257 and Lys271 each participate in a glycyl lysine isopeptide (Lys-Gly) (interchain with G-Cter in SUMO); alternate cross-link. Lys271 is modified (N6-acetyllysine; alternate). Lys275 is covalently cross-linked (Glycyl lysine isopeptide (Lys-Gly) (interchain with G-Cter in SUMO)). A Glycyl lysine isopeptide (Lys-Gly) (interchain with G-Cter in SUMO2) cross-link involves residue Lys371. A Glycyl lysine isopeptide (Lys-Gly) (interchain with G-Cter in SUMO1); alternate cross-link involves residue Lys420. Residue Lys420 forms a Glycyl lysine isopeptide (Lys-Gly) (interchain with G-Cter in SUMO2); alternate linkage. Residues Cys441 and Cys444 each coordinate Zn(2+). Ser507 is modified (phosphoserine). Residue Lys540 forms a Glycyl lysine isopeptide (Lys-Gly) (interchain with G-Cter in SUMO2) linkage. Over residues 551–563 (PEKVGPKQAEDAA) the composition is skewed to basic and acidic residues. Residues 551 to 640 (PEKVGPKQAE…EELDDVIALD (90 aa)) are disordered. Residues 565–582 (SITNGSDDGAQPSTSTAQ) are compositionally biased toward polar residues. Residues 583-597 (EQDDVLIVDSDEEDS) are compositionally biased toward acidic residues. A Phosphoserine modification is found at Ser592. Over residues 606-630 (EERSRKRKLDEKENLSAKRSRIEQK) the composition is skewed to basic and acidic residues. A Glycyl lysine isopeptide (Lys-Gly) (interchain with G-Cter in SUMO) cross-link involves residue Lys611. Lys613 is covalently cross-linked (Glycyl lysine isopeptide (Lys-Gly) (interchain with G-Cter in SUMO); alternate). The residue at position 613 (Lys613) is an N6-acetyllysine; alternate. Glycyl lysine isopeptide (Lys-Gly) (interchain with G-Cter in SUMO) cross-links involve residues Lys617 and Lys623. A compositionally biased stretch (acidic residues) spans 631 to 640 (EELDDVIALD).

Belongs to the ubiquitin-activating E1 family. Heterodimer of SAE1 and UBA2/SAE2. The heterodimer corresponds to the two domains that are encoded on a single polypeptide chain in ubiquitin-activating enzyme E1. Interacts with UBE2I. In terms of processing, sumoylated with SUMO1 and SUMO2/3 and by UBC9. Sumoylation at Lys-236 inhibits enzymatic activity. Sumoylation at the C-terminal lysine cluster plays an essential role in nuclear trafficking.

Its subcellular location is the cytoplasm. The protein localises to the nucleus. Its pathway is protein modification; protein sumoylation. In terms of biological role, the heterodimer acts as an E1 ligase for SUMO1, SUMO2, SUMO3, and probably SUMO4. It mediates ATP-dependent activation of SUMO proteins followed by formation of a thioester bond between a SUMO protein and a conserved active site cysteine residue on UBA2/SAE2. This chain is SUMO-activating enzyme subunit 2 (UBA2), found in Homo sapiens (Human).